The primary structure comprises 569 residues: DNA-binding protein eta2 (569 aa).

Disordered regions lie at residues 1–26 (MMLA…TLSC) and 133–159 (KRKI…AKKR). The span at 9–26 (INENQGTRSNLESPTLSC) shows a compositional bias: polar residues. Ser-21 carries the phosphoserine modification. Myb-like domains are found at residues 322-371 (LDPK…RFVV) and 377-459 (ETID…EKTI). The interval 459–487 (IASYSSNQRQEEDQGKKRKKRKKKKSKGK) is disordered. Residues 474–487 (KKRKKRKKKKSKGK) show a composition bias toward basic residues.

It localises to the nucleus. This is DNA-binding protein eta2 (eta2) from Schizosaccharomyces pombe (strain 972 / ATCC 24843) (Fission yeast).